We begin with the raw amino-acid sequence, 705 residues long: Dynein axonemal intermediate chain 1 (705 aa).

2 disordered regions span residues Met1–Pro44 and Ala122–Ala169. 2 positions are modified to phosphoserine: Ser124 and Ser127. The segment covering Ser124 to Thr135 has biased composition (polar residues). The span at Glu136–Ala159 shows a compositional bias: acidic residues. WD repeat units follow at residues Ser386–Cys426, Lys435–Ile478, Ala543–Ile583, Asp585–Ile625, and Lys633–Pro672.

Belongs to the dynein intermediate chain family. As to quaternary structure, consists of at least two heavy chains and a number of intermediate and light chains. Interacts with BICD2. Interacts with CFAP45 and CFAP52. Interacts with CFAP53.

The protein localises to the cytoplasm. The protein resides in the cytoskeleton. It is found in the cilium axoneme. In terms of biological role, part of the dynein complex of respiratory cilia. This is Dynein axonemal intermediate chain 1 (Dnai1) from Rattus norvegicus (Rat).